Consider the following 205-residue polypeptide: N-(5'-phosphoribosyl)anthranilate isomerase (205 aa).

The protein belongs to the TrpF family.

The catalysed reaction is N-(5-phospho-beta-D-ribosyl)anthranilate = 1-(2-carboxyphenylamino)-1-deoxy-D-ribulose 5-phosphate. It functions in the pathway amino-acid biosynthesis; L-tryptophan biosynthesis; L-tryptophan from chorismate: step 3/5. This chain is N-(5'-phosphoribosyl)anthranilate isomerase, found in Clostridium acetobutylicum (strain ATCC 824 / DSM 792 / JCM 1419 / IAM 19013 / LMG 5710 / NBRC 13948 / NRRL B-527 / VKM B-1787 / 2291 / W).